The chain runs to 607 residues: UvrABC system protein C (607 aa).

Residues 16–94 (GRPGVYRMFD…IKEWRPPYNI (79 aa)) form the GIY-YIG domain. Residues 203-238 (NALSDELNATMEKAAMALDFERAAELRDQVALLRRV) form the UVR domain.

This sequence belongs to the UvrC family. As to quaternary structure, interacts with UvrB in an incision complex.

Its subcellular location is the cytoplasm. In terms of biological role, the UvrABC repair system catalyzes the recognition and processing of DNA lesions. UvrC both incises the 5' and 3' sides of the lesion. The N-terminal half is responsible for the 3' incision and the C-terminal half is responsible for the 5' incision. The chain is UvrABC system protein C from Pseudomonas savastanoi pv. phaseolicola (strain 1448A / Race 6) (Pseudomonas syringae pv. phaseolicola (strain 1448A / Race 6)).